Consider the following 65-residue polypeptide: Protein translocase subunit SecE (65 aa).

The chain crosses the membrane as a helical span at residues 38–58 (IVIVTVVFFLIFFYALDLGIG).

The protein belongs to the SecE/SEC61-gamma family. Component of the Sec protein translocase complex. Heterotrimer consisting of SecY, SecE and SecG subunits. The heterotrimers can form oligomers, although 1 heterotrimer is thought to be able to translocate proteins. Interacts with the ribosome. Interacts with SecDF, and other proteins may be involved. Interacts with SecA.

The protein localises to the cell membrane. Functionally, essential subunit of the Sec protein translocation channel SecYEG. Clamps together the 2 halves of SecY. May contact the channel plug during translocation. The chain is Protein translocase subunit SecE from Staphylococcus carnosus (strain TM300).